The following is a 361-amino-acid chain: Holliday junction branch migration complex subunit RuvB (361 aa).

The interval M1–D25 is disordered. The segment at T5–Y207 is large ATPase domain (RuvB-L). ATP contacts are provided by residues L46, R47, G88, K91, T92, T93, E154–Y156, R197, Y207, and R244. T92 lines the Mg(2+) pocket. The segment at T208–D278 is small ATPAse domain (RuvB-S). Residues P281–S361 are head domain (RuvB-H). DNA contacts are provided by R336 and R341.

This sequence belongs to the RuvB family. As to quaternary structure, homohexamer. Forms an RuvA(8)-RuvB(12)-Holliday junction (HJ) complex. HJ DNA is sandwiched between 2 RuvA tetramers; dsDNA enters through RuvA and exits via RuvB. An RuvB hexamer assembles on each DNA strand where it exits the tetramer. Each RuvB hexamer is contacted by two RuvA subunits (via domain III) on 2 adjacent RuvB subunits; this complex drives branch migration. In the full resolvosome a probable DNA-RuvA(4)-RuvB(12)-RuvC(2) complex forms which resolves the HJ.

It localises to the cytoplasm. The catalysed reaction is ATP + H2O = ADP + phosphate + H(+). The RuvA-RuvB-RuvC complex processes Holliday junction (HJ) DNA during genetic recombination and DNA repair, while the RuvA-RuvB complex plays an important role in the rescue of blocked DNA replication forks via replication fork reversal (RFR). RuvA specifically binds to HJ cruciform DNA, conferring on it an open structure. The RuvB hexamer acts as an ATP-dependent pump, pulling dsDNA into and through the RuvAB complex. RuvB forms 2 homohexamers on either side of HJ DNA bound by 1 or 2 RuvA tetramers; 4 subunits per hexamer contact DNA at a time. Coordinated motions by a converter formed by DNA-disengaged RuvB subunits stimulates ATP hydrolysis and nucleotide exchange. Immobilization of the converter enables RuvB to convert the ATP-contained energy into a lever motion, pulling 2 nucleotides of DNA out of the RuvA tetramer per ATP hydrolyzed, thus driving DNA branch migration. The RuvB motors rotate together with the DNA substrate, which together with the progressing nucleotide cycle form the mechanistic basis for DNA recombination by continuous HJ branch migration. Branch migration allows RuvC to scan DNA until it finds its consensus sequence, where it cleaves and resolves cruciform DNA. This chain is Holliday junction branch migration complex subunit RuvB, found in Delftia acidovorans (strain DSM 14801 / SPH-1).